The sequence spans 242 residues: Triosephosphate isomerase (242 aa).

8–10 contacts substrate; sequence NWK. The active-site Electrophile is the His-98. Glu-167 functions as the Proton acceptor in the catalytic mechanism. Residues Gly-173, Ser-205, and 226–227 each bind substrate; that span reads GG.

It belongs to the triosephosphate isomerase family. In terms of assembly, homodimer.

It localises to the cytoplasm. The catalysed reaction is D-glyceraldehyde 3-phosphate = dihydroxyacetone phosphate. Its pathway is carbohydrate biosynthesis; gluconeogenesis. The protein operates within carbohydrate degradation; glycolysis; D-glyceraldehyde 3-phosphate from glycerone phosphate: step 1/1. Involved in the gluconeogenesis. Catalyzes stereospecifically the conversion of dihydroxyacetone phosphate (DHAP) to D-glyceraldehyde-3-phosphate (G3P). This is Triosephosphate isomerase from Mesomycoplasma hyopneumoniae (strain 7448) (Mycoplasma hyopneumoniae).